A 592-amino-acid polypeptide reads, in one-letter code: A-type ATP synthase subunit A (592 aa).

Position 236-243 (236-243 (GPFGSGKT)) interacts with ATP.

The protein belongs to the ATPase alpha/beta chains family. Has multiple subunits with at least A(3), B(3), C, D, E, F, H, I and proteolipid K(x).

It is found in the cell membrane. It carries out the reaction ATP + H2O + 4 H(+)(in) = ADP + phosphate + 5 H(+)(out). In terms of biological role, component of the A-type ATP synthase that produces ATP from ADP in the presence of a proton gradient across the membrane. The A chain is the catalytic subunit. This chain is A-type ATP synthase subunit A, found in Methanopyrus kandleri (strain AV19 / DSM 6324 / JCM 9639 / NBRC 100938).